The primary structure comprises 248 residues: Putative imidazole glycerol phosphate synthase subunit hisF2 (248 aa).

Asp-129 is an active-site residue.

The protein belongs to the HisA/HisF family. Heterodimer of HisH and HisF.

It is found in the cytoplasm. It catalyses the reaction 5-[(5-phospho-1-deoxy-D-ribulos-1-ylimino)methylamino]-1-(5-phospho-beta-D-ribosyl)imidazole-4-carboxamide + L-glutamine = D-erythro-1-(imidazol-4-yl)glycerol 3-phosphate + 5-amino-1-(5-phospho-beta-D-ribosyl)imidazole-4-carboxamide + L-glutamate + H(+). It functions in the pathway amino-acid biosynthesis; L-histidine biosynthesis; L-histidine from 5-phospho-alpha-D-ribose 1-diphosphate: step 5/9. In terms of biological role, IGPS catalyzes the conversion of PRFAR and glutamine to IGP, AICAR and glutamate. The HisF subunit catalyzes the cyclization activity that produces IGP and AICAR from PRFAR using the ammonia provided by the HisH subunit. The chain is Putative imidazole glycerol phosphate synthase subunit hisF2 (hisF2) from Campylobacter jejuni subsp. jejuni serotype O:2 (strain ATCC 700819 / NCTC 11168).